A 235-amino-acid polypeptide reads, in one-letter code: Large ribosomal subunit protein uL1 (235 aa).

It belongs to the universal ribosomal protein uL1 family. As to quaternary structure, part of the 50S ribosomal subunit.

Functionally, binds directly to 23S rRNA. The L1 stalk is quite mobile in the ribosome, and is involved in E site tRNA release. Its function is as follows. Protein L1 is also a translational repressor protein, it controls the translation of the L11 operon by binding to its mRNA. This Prochlorococcus marinus (strain MIT 9313) protein is Large ribosomal subunit protein uL1.